A 731-amino-acid polypeptide reads, in one-letter code: SUN domain-containing protein 2 (731 aa).

Disordered regions lie at residues 1–69 (MSRR…SHTS) and 106–142 (SGDLRGRRRRGTGGSESSKANGLTAESKASEDFFGSS). Residues 1 to 128 (MSRRSQRLTR…GSESSKANGL (128 aa)) are LMNA-binding. Over 1 to 226 (MSRRSQRLTR…SRHFSLNLKS (226 aa)) the chain is Nuclear. Ser-12 carries the post-translational modification Phosphoserine. A compositionally biased stretch (low complexity) spans 18–33 (GGSSSSGASSVAGSQG). A phosphoserine mark is found at Ser-39 and Ser-55. Residue Thr-117 is modified to Phosphothreonine. Phosphoserine is present on residues Ser-120, Ser-123, and Ser-147. A helical membrane pass occupies residues 227-247 (FLWFLLLLLLLTGLTYGAWHF). Residues 248 to 731 (YPLGLQTLQP…RFRVHGEPAH (484 aa)) are Perinuclear space-facing. Coiled coils occupy residues 396-452 (QESE…VADE) and 486-519 (RSGLLQRDEMHAQLQELENKILTKMAEMQGKSAR). Residues 521 to 731 (AAASLGQILQ…RFRVHGEPAH (211 aa)) are sufficient for interaction with SYNE1 and SYNE2. An SUN domain is found at 569–730 (GASVISTRCS…YRFRVHGEPA (162 aa)). Asn-650 carries N-linked (GlcNAc...) asparagine glycosylation.

Core component of the LINC complex which is composed of inner nuclear membrane SUN domain-containing proteins coupled to outer nuclear membrane KASH domain-containing nesprins. SUN and KASH domain-containing proteins seem to bind each other promiscuously; however, differentially expression of LINC complex constituents is giving rise to specific assemblies. At least SUN1/2-containing core LINC complexes are proposed to be hexameric composed of three protomers of each KASH and SUN domain-containing protein. Interacts with SYNE2; the SUN2:SYNE2/KASH2 LINC complex is a heterohexamer; the homotrimeric cloverleave-like conformation of the SUN domain is a prerequisite for LINC complex formation in which three separate SYNE2/KASH2 peptides bind at the interface of adjacent SUN domains. Component of a probable SUN2:KASH5 LINC complex. Interacts with SYNE1 and SYNE3; probably forming respective LINC complexes. Interacts with A-type lamin. Interaction with lamins B1 and C is hardly detectable. Interacts with EMD. Interacts with RAB5A. Interacts with TMEM43 and TMEM201. Interacts with IRAG2. Post-translationally, the disulfide bond with SYNE2 is required for stability of the SUN2:SYNE2/KASH2 LINC complex under tensile forces though not required for the interaction. The disulfide bond is proposed to be conserved in LINC complexes involved in force transmission. Highly expressed in heart, placenta and muscle.

The protein resides in the nucleus inner membrane. Its subcellular location is the nucleus envelope. It localises to the endosome membrane. Functionally, as a component of the LINC (LInker of Nucleoskeleton and Cytoskeleton) complex, involved in the connection between the nuclear lamina and the cytoskeleton. The nucleocytoplasmic interactions established by the LINC complex play an important role in the transmission of mechanical forces across the nuclear envelope and in nuclear movement and positioning. Specifically, SYNE2 and SUN2 assemble in arrays of transmembrane actin-associated nuclear (TAN) lines which are bound to F-actin cables and couple the nucleus to retrograde actin flow during actin-dependent nuclear movement. Required for interkinetic nuclear migration (INM) and essential for nucleokinesis and centrosome-nucleus coupling during radial neuronal migration in the cerebral cortex and during glial migration. Required for nuclear migration in retinal photoreceptor progenitors implicating association with cytoplasmic dynein-dynactin and kinesin motor complexes, and probably B-type lamins; SUN1 and SUN2 seem to act redundantly. The SUN1/2:KASH5 LINC complex couples telomeres to microtubules during meiosis; SUN1 and SUN2 seem to act at least partial redundantly. Anchors chromosome movement in the prophase of meiosis and is involved in selective gene expression of coding and non-coding RNAs needed for gametogenesis. Required for telomere attachment to nuclear envelope and gametogenesis. May also function on endocytic vesicles as a receptor for Rab5-GDP and participate in the activation of Rab5. This Mus musculus (Mouse) protein is SUN domain-containing protein 2.